Reading from the N-terminus, the 214-residue chain is Glutathione S-transferase F11 (214 aa).

A GST N-terminal domain is found at 2–82; it reads VVKVYGQIKA…YYATKYADQG (81 aa). Residues 11 to 12, 40 to 41, 53 to 54, and 66 to 67 contribute to the glutathione site; these read AA, QK, QV, and ES. Residues 89–214 form the GST C-terminal domain; sequence TLEGRAIVDQ…WKKLMELAAY (126 aa).

This sequence belongs to the GST superfamily. Phi family.

The protein resides in the cytoplasm. Its subcellular location is the cytosol. It catalyses the reaction RX + glutathione = an S-substituted glutathione + a halide anion + H(+). Functionally, may be involved in the conjugation of reduced glutathione to a wide number of exogenous and endogenous hydrophobic electrophiles and have a detoxification role against certain herbicides. This chain is Glutathione S-transferase F11, found in Arabidopsis thaliana (Mouse-ear cress).